The chain runs to 388 residues: Phosphoribosylformylglycinamidine cyclo-ligase, chloroplastic/mitochondrial (388 aa).

Belongs to the AIR synthase family.

The protein resides in the plastid. Its subcellular location is the chloroplast. The protein localises to the mitochondrion. The enzyme catalyses 2-formamido-N(1)-(5-O-phospho-beta-D-ribosyl)acetamidine + ATP = 5-amino-1-(5-phospho-beta-D-ribosyl)imidazole + ADP + phosphate + H(+). The protein operates within purine metabolism; IMP biosynthesis via de novo pathway; 5-amino-1-(5-phospho-D-ribosyl)imidazole from N(2)-formyl-N(1)-(5-phospho-D-ribosyl)glycinamide: step 2/2. The chain is Phosphoribosylformylglycinamidine cyclo-ligase, chloroplastic/mitochondrial (PUR5) from Vigna unguiculata (Cowpea).